Consider the following 190-residue polypeptide: MGAELCKRICCEFGTTPGEPLKDALGRQVSLRSYDNIPPTSSSDEGEDDDDGEDDDNEERQQKLRLCGSGCGGNDSSSGSHREATHDGSKKNAVRSTFREDKAPKPSKQSKKKKKPSKHHHHQQSSIMQETDDLDEEDTSIYLSPPPVPPVQVVAKRLPRPDTPRTPRQKKISQRPPTPGTKKPAASLPF.

Glycine 2 is lipidated: N-myristoyl glycine; by host. The tract at residues 27-190 (RQVSLRSYDN…TKKPAASLPF (164 aa)) is disordered. Residues 30–43 (SLRSYDNIPPTSSS) are compositionally biased toward polar residues. A compositionally biased stretch (acidic residues) spans 44–58 (DEGEDDDDGEDDDNE). A compositionally biased stretch (basic and acidic residues) spans 80-90 (SHREATHDGSK). The segment covering 108-123 (KQSKKKKKPSKHHHHQ) has biased composition (basic residues). The segment covering 130–139 (ETDDLDEEDT) has biased composition (acidic residues).

The protein belongs to the herpesviridae cytoplasmic envelopment protein 3 family. In terms of assembly, interacts with cytoplasmic envelopment protein 2; this interaction is essential for the proper localization of each protein to the assembly complex and thus for the production of infectious virus. Myristoylation and palmitoylation (probably on one or more of the nearby cysteines at the N-terminus) enable membrane-binding and Golgi apparatus-specific targeting and are essential for efficient packaging. In terms of processing, phosphorylated. Phosphorylation does not seem to be required for recycling to the host Golgi apparatus. Packaging is selective for underphosphorylated forms.

It is found in the virion tegument. The protein resides in the virion membrane. Its subcellular location is the host cell membrane. The protein localises to the host Golgi apparatus membrane. Plays an important role in the cytoplasmic envelopment of tegument proteins and capsids during the assembly and egress processes. Also participates in viral entry at the fusion step probably by regulating the core fusion machinery. The sequence is that of Cytoplasmic envelopment protein 3 (UL99) from Human cytomegalovirus (strain AD169) (HHV-5).